The following is a 673-amino-acid chain: MRRVRGVGNLLVTILVVLIGFKQARKYCESNEAEFCRLTSLSRASPWWNEHIDPYWDSYVSPCVTKIHDYEHKLDEWAAPRIDRAYYQVQDIVETKVVPVTYKWYKTVQFKTQVYYNGHFVPFLGHARILAKQWLASEGFFQRLYLHVQQGLFCLRNWSLWVWNGSLEAFNEIHSWSGHALQEISNKFSVTENQSGEPVTDEDPSDTDESKYYDAEYFEGEQGDYNEDDETVYLTSTIIETVTLSDEKQLDKSTSAANGDDGSSLDVPLRDLVQDEFQAWSNTVEQKASNTLTQFDSEVEELVEAKLSKAQPNITGLLQGISESFQSHYRIINRAILDVDCTMELDPETGEQLYFNKDGTQLRKYVTRPLMREFFSSAHAHVDERLEMVRARLEKFVAAVNKEVEQVRQEHLEVYEEWGDVMVSEWSKRMAYVDVVAAMGAEDMNQQQHDNWKRFLKLKKQVVNTRDLLMQHPAKLERLQKFLNDIQFTLMALQRDAGEYLFILRSQANIAFQTREKLEREREEEERRKLEQERQIQEQKEREQQELAENEARAARERLALEQGQGQEQLEQNSDEAFFSMEDITATPLGADDNTDYENALDDADSQLSESGDSEDNFYDSYEGDEEDASRELERLERESAERETLDRLELGQRQKLQEEQHRDELHHSSQAN.

The first 24 residues, 1–24 (MRRVRGVGNLLVTILVVLIGFKQA), serve as a signal peptide directing secretion. Residues 503–568 (ILRSQANIAF…LALEQGQGQE (66 aa)) are a coiled coil. Disordered stretches follow at residues 530 to 551 (LEQERQIQEQKEREQQELAENE) and 587 to 673 (TPLG…SQAN). 2 stretches are compositionally biased toward acidic residues: residues 593–605 (DNTDYENALDDAD) and 612–629 (GDSEDNFYDSYEGDEEDA). Residues 617 to 647 (NFYDSYEGDEEDASRELERLERESAERETLD) adopt a coiled-coil conformation. A compositionally biased stretch (basic and acidic residues) spans 630 to 673 (SRELERLERESAERETLDRLELGQRQKLQEEQHRDELHHSSQAN).

The protein belongs to the SHE10 family. As to quaternary structure, component of the mitochondria-localized RNase mitochondrial RNA-processing (RNase MRP) composed of one single RNA encoded by the NME1 gene and at least 31 proteins. Absent in the nucleus-localized RNase MRP (NuMRP).

The protein resides in the mitochondrion. Its function is as follows. Involved in spore wall assembly. May be a component of the mitochondrial RNase MRP (MtMRP), a ribonucleoprotein endoribonuclease involved in the cleaving RNA transcripts to generate primers for DNA replication in mitochondria. The chain is Outer spore wall assembly protein SHE10 from Lachancea thermotolerans (strain ATCC 56472 / CBS 6340 / NRRL Y-8284) (Yeast).